The sequence spans 524 residues: Phosphoenolpyruvate carboxykinase (ATP) (524 aa).

Substrate-binding residues include Arg52, Tyr188, and Lys194. Residues Lys194, His213, and 229-237 each bind ATP; that span reads GLSGTGKTT. Mn(2+) is bound by residues Lys194 and His213. Asp250 lines the Mn(2+) pocket. ATP is bound by residues Glu278, Arg314, and Thr439. Arg314 contacts substrate.

It belongs to the phosphoenolpyruvate carboxykinase (ATP) family. The cofactor is Mn(2+).

The protein localises to the cytoplasm. It catalyses the reaction oxaloacetate + ATP = phosphoenolpyruvate + ADP + CO2. Its pathway is carbohydrate biosynthesis; gluconeogenesis. Involved in the gluconeogenesis. Catalyzes the conversion of oxaloacetate (OAA) to phosphoenolpyruvate (PEP) through direct phosphoryl transfer between the nucleoside triphosphate and OAA. This chain is Phosphoenolpyruvate carboxykinase (ATP), found in Campylobacter jejuni subsp. jejuni serotype O:23/36 (strain 81-176).